We begin with the raw amino-acid sequence, 227 residues long: Urease subunit gamma/beta (227 aa).

Residues 1–101 (MRLTPTERDR…LAVVTDPIGG (101 aa)) are urease gamma. Residues 102-227 (GLGDQAPGAL…ACGYLGVEQR (126 aa)) are urease beta.

It in the N-terminal section; belongs to the urease gamma subunit family. This sequence in the C-terminal section; belongs to the urease beta subunit family. As to quaternary structure, heterohexamer of 3 UreC (alpha) and 3 UreAB (gamma/beta) subunits.

The protein resides in the cytoplasm. It carries out the reaction urea + 2 H2O + H(+) = hydrogencarbonate + 2 NH4(+). It participates in nitrogen metabolism; urea degradation; CO(2) and NH(3) from urea (urease route): step 1/1. The chain is Urease subunit gamma/beta from Streptomyces avermitilis (strain ATCC 31267 / DSM 46492 / JCM 5070 / NBRC 14893 / NCIMB 12804 / NRRL 8165 / MA-4680).